A 378-amino-acid polypeptide reads, in one-letter code: uncharacterized protein (378 aa).

Cysteine 16 serves as the catalytic For GATase activity. A Glutamine amidotransferase type-2 domain is found at 16–378; it reads CGLFGVIDRS…ELAKQLSEVE (363 aa).

This is an uncharacterized protein from Archaeoglobus fulgidus (strain ATCC 49558 / DSM 4304 / JCM 9628 / NBRC 100126 / VC-16).